The primary structure comprises 983 residues: Poly [ADP-ribose] polymerase 1 (983 aa).

PARP-type zinc fingers lie at residues Trp-8 to Ala-91 and Tyr-114 to Leu-194. Residues Cys-20, Cys-23, His-52, Cys-55, Cys-126, Cys-129, His-156, and Cys-159 each contribute to the Zn(2+) site. The tract at residues Ala-197 to Glu-246 is disordered. The span at Arg-215 to Lys-226 shows a compositional bias: basic and acidic residues. The PADR1 zinc-binding domain maps to Thr-236–Pro-375. The tract at residues Gly-301–Lys-345 is zinc ribbon. Residues Cys-306, Cys-309, Cys-322, and Cys-332 each contribute to the Zn(2+) site. The tract at residues Pro-369–Glu-397 is disordered. Residues Gly-379–Lys-388 are compositionally biased toward polar residues. The BRCT domain maps to Ser-394–Ile-484. The region spanning His-511–Phe-611 is the WGR domain. One can recognise a PARP alpha-helical domain in the interval Ser-633–Gly-751. One can recognise a PARP catalytic domain in the interval Glu-758–Arg-983.

Belongs to the ARTD/PARP family.

Its subcellular location is the nucleus. The catalysed reaction is NAD(+) + (ADP-D-ribosyl)n-acceptor = nicotinamide + (ADP-D-ribosyl)n+1-acceptor + H(+).. It carries out the reaction L-aspartyl-[protein] + NAD(+) = 4-O-(ADP-D-ribosyl)-L-aspartyl-[protein] + nicotinamide. The enzyme catalyses L-glutamyl-[protein] + NAD(+) = 5-O-(ADP-D-ribosyl)-L-glutamyl-[protein] + nicotinamide. Functionally, involved in the base excision repair (BER) pathway, by catalyzing the poly(ADP-ribosyl)ation of a limited number of acceptor proteins involved in chromatin architecture and in DNA metabolism. This modification follows DNA damages and appears as an obligatory step in a detection/signaling pathway leading to the reparation of DNA strand breaks. This is Poly [ADP-ribose] polymerase 1 (PARP1) from Arabidopsis thaliana (Mouse-ear cress).